Reading from the N-terminus, the 242-residue chain is DNA repair protein RecO (242 aa).

Belongs to the RecO family. Monomer.

Its function is as follows. Involved in DNA repair and RecF pathway recombination. The chain is DNA repair protein RecO from Salmonella agona (strain SL483).